The chain runs to 588 residues: Adenine deaminase (588 aa).

It belongs to the metallo-dependent hydrolases superfamily. Adenine deaminase family. As to quaternary structure, homodimer. Mn(2+) serves as cofactor.

The catalysed reaction is adenine + H2O + H(+) = hypoxanthine + NH4(+). The polypeptide is Adenine deaminase (Escherichia coli (strain K12 / DH10B)).